Here is a 290-residue protein sequence, read N- to C-terminus: 33 kDa chaperonin (290 aa).

2 disulfide bridges follow: Cys-235/Cys-237 and Cys-268/Cys-271.

Belongs to the HSP33 family. In terms of processing, under oxidizing conditions two disulfide bonds are formed involving the reactive cysteines. Under reducing conditions zinc is bound to the reactive cysteines and the protein is inactive.

The protein resides in the cytoplasm. In terms of biological role, redox regulated molecular chaperone. Protects both thermally unfolding and oxidatively damaged proteins from irreversible aggregation. Plays an important role in the bacterial defense system toward oxidative stress. The polypeptide is 33 kDa chaperonin (Streptococcus pyogenes serotype M2 (strain MGAS10270)).